The sequence spans 286 residues: ATP synthase gamma chain (286 aa).

The protein belongs to the ATPase gamma chain family. As to quaternary structure, F-type ATPases have 2 components, CF(1) - the catalytic core - and CF(0) - the membrane proton channel. CF(1) has five subunits: alpha(3), beta(3), gamma(1), delta(1), epsilon(1). CF(0) has three main subunits: a, b and c.

Its subcellular location is the cell inner membrane. In terms of biological role, produces ATP from ADP in the presence of a proton gradient across the membrane. The gamma chain is believed to be important in regulating ATPase activity and the flow of protons through the CF(0) complex. This Shewanella sp. (strain MR-4) protein is ATP synthase gamma chain.